The sequence spans 67 residues: Small ribosomal subunit protein eS31 (67 aa).

4 residues coordinate Zn(2+): Cys-31, Cys-34, Cys-49, and Cys-52. The segment at 31–52 (CPKCGAGVFMAEHLNRFACGKC) adopts a C4-type zinc-finger fold.

This sequence belongs to the eukaryotic ribosomal protein eS31 family. As to quaternary structure, part of the 30S ribosomal subunit. Requires Zn(2+) as cofactor.

This is Small ribosomal subunit protein eS31 from Methanococcus maripaludis (strain C5 / ATCC BAA-1333).